A 636-amino-acid polypeptide reads, in one-letter code: MSQPPWRCFSLLIFVLTIFSTKPSSASTSCSSSFHCPPFNSSPPYPFSASPGCGHPNFQIQCSSSRATITIKNLTFSILHYSSISSSLTLSPITNTNRNTNNCSSLRFSSSPNRFIDLTGSPFRVSDSSCSRLSLLRPCSPFTLPNCSRCPWDCKLLKNPGRILHGCESTHGSLSEQGCQGDLLGFLQDFFTRFGFEVEWDESQDPYFIKCRDCQIKNGVCGFNSTHPNQDFICFHKSRSELVTQRDNNKRVNHIAVLSLIFALTCLLLVFSVAVAIFRSRRASFLSSINEEDPAALFLRHHRSAALLPPVFTFEELESATNKFDPKRKIGDGGFGSVYLGQLSDGQLLAVKFLHHHHGATAAATEHCKAFSMKSFCNEILILSSINHPNLVKLHGYCSDPRGLLLVHDYVTNGTLADHLHGRGPKMTWRVRLDIALQTALAMEYLHFDIVPPVVHRDITSSNIFVEKDMKIKVGDFGLSRLLVFSETTVNSATSSDYVCTGPQGTPGYLDPDYHRSFRLTEKSDVYSYGVVLMELITGMKAVDQRREKRDMALADLVVSKIQMGLLDQVIDPLLALDGDDVAAVSDGFGVAAVAELAFRCVATDKDDRPDAKEIVQELRRIRSHTRVADDDVAKN.

The N-terminal stretch at 1 to 26 (MSQPPWRCFSLLIFVLTIFSTKPSSA) is a signal peptide. Over 27 to 257 (STSCSSSFHC…NNKRVNHIAV (231 aa)) the chain is Extracellular. N-linked (GlcNAc...) asparagine glycosylation is found at N73, N102, N146, and N224. A helical transmembrane segment spans residues 258–278 (LSLIFALTCLLLVFSVAVAIF). Residues 279–636 (RSRRASFLSS…RVADDDVAKN (358 aa)) lie on the Cytoplasmic side of the membrane. Residues 324-628 (FDPKRKIGDG…LRRIRSHTRV (305 aa)) enclose the Protein kinase domain. ATP is bound by residues 330 to 338 (IGDGGFGSV) and K352. D458 (proton acceptor) is an active-site residue.

This sequence belongs to the protein kinase superfamily. Ser/Thr protein kinase family.

It is found in the cell membrane. The catalysed reaction is L-seryl-[protein] + ATP = O-phospho-L-seryl-[protein] + ADP + H(+). It catalyses the reaction L-threonyl-[protein] + ATP = O-phospho-L-threonyl-[protein] + ADP + H(+). The protein is LEAF RUST 10 DISEASE-RESISTANCE LOCUS RECEPTOR-LIKE PROTEIN KINASE-like 1.5 of Arabidopsis thaliana (Mouse-ear cress).